A 277-amino-acid chain; its full sequence is Glycerol-3-phosphate acyltransferase (277 aa).

5 helical membrane passes run 3-23, 55-75, 79-99, 111-131, and 155-175; these read LFIF…AIIV, IMVM…AKLL, PVTV…PVFF, IGAL…TWLL, and LILV…ILVL. The segment at 207-277 is disordered; the sequence is SPATSAEQEF…PKTKTVKEKE (71 aa). The segment covering 216 to 239 has biased composition (basic and acidic residues); the sequence is FPGKEVIDTNIDETEKTEQAEAVK. Basic residues-rich tracts occupy residues 240–253 and 262–271; these read KPKV…AKKT and KPKSTKPKTK.

It belongs to the PlsY family. As to quaternary structure, probably interacts with PlsX.

It localises to the cell inner membrane. The enzyme catalyses an acyl phosphate + sn-glycerol 3-phosphate = a 1-acyl-sn-glycero-3-phosphate + phosphate. The protein operates within lipid metabolism; phospholipid metabolism. Functionally, catalyzes the transfer of an acyl group from acyl-phosphate (acyl-PO(4)) to glycerol-3-phosphate (G3P) to form lysophosphatidic acid (LPA). This enzyme utilizes acyl-phosphate as fatty acyl donor, but not acyl-CoA or acyl-ACP. The sequence is that of Glycerol-3-phosphate acyltransferase from Legionella pneumophila (strain Corby).